Consider the following 587-residue polypeptide: Aspartate--tRNA ligase (587 aa).

Glu-173 is a binding site for L-aspartate. Residues 197–200 (QTLK) form an aspartate region. Arg-219 is a binding site for L-aspartate. ATP contacts are provided by residues 219-221 (RDE) and Gln-228. Position 446 (His-446) interacts with L-aspartate. Position 480 (Glu-480) interacts with ATP. L-aspartate is bound at residue Arg-487. ATP is bound at residue 532-535 (GLDR).

It belongs to the class-II aminoacyl-tRNA synthetase family. Type 1 subfamily. Homodimer.

It is found in the cytoplasm. The catalysed reaction is tRNA(Asp) + L-aspartate + ATP = L-aspartyl-tRNA(Asp) + AMP + diphosphate. Functionally, catalyzes the attachment of L-aspartate to tRNA(Asp) in a two-step reaction: L-aspartate is first activated by ATP to form Asp-AMP and then transferred to the acceptor end of tRNA(Asp). The protein is Aspartate--tRNA ligase of Phocaeicola vulgatus (strain ATCC 8482 / DSM 1447 / JCM 5826 / CCUG 4940 / NBRC 14291 / NCTC 11154) (Bacteroides vulgatus).